Here is a 300-residue protein sequence, read N- to C-terminus: Peptidyl-prolyl cis-trans isomerase E (300 aa).

Residues 6 to 84 (RTIYVGGLAD…RTIRVNLAKP (79 aa)) enclose the RRM domain. In terms of domain architecture, PPIase cyclophilin-type spans 142–298 (FFDIRIGGND…QKIVIYSCGE (157 aa)).

It belongs to the cyclophilin-type PPIase family. PPIase E subfamily.

It localises to the nucleus. The enzyme catalyses [protein]-peptidylproline (omega=180) = [protein]-peptidylproline (omega=0). Functionally, PPIases accelerate the folding of proteins. It catalyzes the cis-trans isomerization of proline imidic peptide bonds in oligopeptides. Combines RNA-binding and PPIase activities. The polypeptide is Peptidyl-prolyl cis-trans isomerase E (cyp33) (Drosophila melanogaster (Fruit fly)).